A 272-amino-acid polypeptide reads, in one-letter code: 4-hydroxy-tetrahydrodipicolinate reductase (272 aa).

NAD(+) is bound by residues 11–16 and Glu-37; that span reads GAGGRM. Arg-38 is a binding site for NADP(+). NAD(+) is bound by residues 101 to 103 and 125 to 128; these read GTT and AANF. His-158 functions as the Proton donor/acceptor in the catalytic mechanism. A (S)-2,3,4,5-tetrahydrodipicolinate-binding site is contributed by His-159. Lys-162 functions as the Proton donor in the catalytic mechanism. 168 to 169 lines the (S)-2,3,4,5-tetrahydrodipicolinate pocket; the sequence is GT.

This sequence belongs to the DapB family. In terms of assembly, homotetramer.

It is found in the cytoplasm. The catalysed reaction is (S)-2,3,4,5-tetrahydrodipicolinate + NAD(+) + H2O = (2S,4S)-4-hydroxy-2,3,4,5-tetrahydrodipicolinate + NADH + H(+). It catalyses the reaction (S)-2,3,4,5-tetrahydrodipicolinate + NADP(+) + H2O = (2S,4S)-4-hydroxy-2,3,4,5-tetrahydrodipicolinate + NADPH + H(+). Its pathway is amino-acid biosynthesis; L-lysine biosynthesis via DAP pathway; (S)-tetrahydrodipicolinate from L-aspartate: step 4/4. Functionally, catalyzes the conversion of 4-hydroxy-tetrahydrodipicolinate (HTPA) to tetrahydrodipicolinate. The chain is 4-hydroxy-tetrahydrodipicolinate reductase from Edwardsiella ictaluri (strain 93-146).